The sequence spans 222 residues: Histidine biosynthesis bifunctional protein HisIE (222 aa).

Positions 1–128 are phosphoribosyl-AMP cyclohydrolase; it reads MQPLSPAFID…SNALSPPADA (128 aa). The phosphoribosyl-ATP pyrophosphohydrolase stretch occupies residues 129-222; that stretch reads CTELFRVIES…AARRGAPRRH (94 aa).

The protein in the N-terminal section; belongs to the PRA-CH family. In the C-terminal section; belongs to the PRA-PH family.

It localises to the cytoplasm. The catalysed reaction is 1-(5-phospho-beta-D-ribosyl)-ATP + H2O = 1-(5-phospho-beta-D-ribosyl)-5'-AMP + diphosphate + H(+). The enzyme catalyses 1-(5-phospho-beta-D-ribosyl)-5'-AMP + H2O = 1-(5-phospho-beta-D-ribosyl)-5-[(5-phospho-beta-D-ribosylamino)methylideneamino]imidazole-4-carboxamide. Its pathway is amino-acid biosynthesis; L-histidine biosynthesis; L-histidine from 5-phospho-alpha-D-ribose 1-diphosphate: step 2/9. It participates in amino-acid biosynthesis; L-histidine biosynthesis; L-histidine from 5-phospho-alpha-D-ribose 1-diphosphate: step 3/9. In Parasynechococcus marenigrum (strain WH8102), this protein is Histidine biosynthesis bifunctional protein HisIE.